Consider the following 361-residue polypeptide: Queuine tRNA-ribosyltransferase (361 aa).

Catalysis depends on Asp-92, which acts as the Proton acceptor. Substrate contacts are provided by residues Asp-92 to Phe-96, Asp-146, Gln-189, and Gly-216. The tract at residues Gly-247–Asp-253 is RNA binding. Asp-266 acts as the Nucleophile in catalysis. Positions Thr-271–Arg-275 are RNA binding; important for wobble base 34 recognition. The Zn(2+) site is built by Cys-304, Cys-306, Cys-309, and His-335.

It belongs to the queuine tRNA-ribosyltransferase family. As to quaternary structure, homodimer. Within each dimer, one monomer is responsible for RNA recognition and catalysis, while the other monomer binds to the replacement base PreQ1. The cofactor is Zn(2+).

It carries out the reaction 7-aminomethyl-7-carbaguanine + guanosine(34) in tRNA = 7-aminomethyl-7-carbaguanosine(34) in tRNA + guanine. It functions in the pathway tRNA modification; tRNA-queuosine biosynthesis. Functionally, catalyzes the base-exchange of a guanine (G) residue with the queuine precursor 7-aminomethyl-7-deazaguanine (PreQ1) at position 34 (anticodon wobble position) in tRNAs with GU(N) anticodons (tRNA-Asp, -Asn, -His and -Tyr). Catalysis occurs through a double-displacement mechanism. The nucleophile active site attacks the C1' of nucleotide 34 to detach the guanine base from the RNA, forming a covalent enzyme-RNA intermediate. The proton acceptor active site deprotonates the incoming PreQ1, allowing a nucleophilic attack on the C1' of the ribose to form the product. After dissociation, two additional enzymatic reactions on the tRNA convert PreQ1 to queuine (Q), resulting in the hypermodified nucleoside queuosine (7-(((4,5-cis-dihydroxy-2-cyclopenten-1-yl)amino)methyl)-7-deazaguanosine). This is Queuine tRNA-ribosyltransferase from Rickettsia canadensis (strain McKiel).